We begin with the raw amino-acid sequence, 435 residues long: Adenylosuccinate synthetase (435 aa).

GTP contacts are provided by residues 13-19 and 41-43; these read GDEGKGK and GHT. Aspartate 14 serves as the catalytic Proton acceptor. Aspartate 14 and glycine 41 together coordinate Mg(2+). Residues 14 to 17, 39 to 42, threonine 131, arginine 145, glutamine 226, threonine 241, and arginine 309 each bind IMP; these read DEGK and NAGH. Histidine 42 (proton donor) is an active-site residue. A substrate-binding site is contributed by 305–311; the sequence is TVTGRKR. Residues arginine 311, 337-339, and 419-421 each bind GTP; these read KLD and STG.

This sequence belongs to the adenylosuccinate synthetase family. In terms of assembly, homodimer. Mg(2+) serves as cofactor.

The protein resides in the cytoplasm. It catalyses the reaction IMP + L-aspartate + GTP = N(6)-(1,2-dicarboxyethyl)-AMP + GDP + phosphate + 2 H(+). Its pathway is purine metabolism; AMP biosynthesis via de novo pathway; AMP from IMP: step 1/2. In terms of biological role, plays an important role in the de novo pathway of purine nucleotide biosynthesis. Catalyzes the first committed step in the biosynthesis of AMP from IMP. This is Adenylosuccinate synthetase from Dechloromonas aromatica (strain RCB).